A 428-amino-acid chain; its full sequence is MNVLVIGSGGREHTIAWKFAQSEKVERVYVAPGNDGMSDVATCVAISEQDHDQLVAFAKENKIGLTFVGPEVPLLAGIVDRFQEEGLRVFGPSKRAAEIEGSKSYAKQVMKTYNIPTGSYEVFTSFDEAKAYVEAEGVPIVIKADGLAAGKGVVVALTNEEAIAALDDMLNQDKFGGAGARVVIEEYLEGEELSLMAFVHGETVIPMVGAQDHKRAFDGDQGPNTGGMGAYSPVPQFSDVQLKQAVNEILIPTARALMQEERSFTGILYAGLMMTADGPKVIEFNARFGDPETQVVLPRLKSDLVNVIESLLDGQEPELEWDEQAVLGVVLATKGYPGSYEKGYTISGLEQLEDDTLVFHAGTKREEEELVTNGGRVLLVAKQASTLREAQAAVYEELNKVKSDGLFYRKDIGSKAIAERAVSSQTEQ.

The region spanning 107 to 313 (KQVMKTYNIP…LVNVIESLLD (207 aa)) is the ATP-grasp domain. Residue 133 to 194 (VEAEGVPIVI…EEYLEGEELS (62 aa)) coordinates ATP. 2 residues coordinate Mg(2+): E283 and N285.

This sequence belongs to the GARS family. It depends on Mg(2+) as a cofactor. The cofactor is Mn(2+).

The catalysed reaction is 5-phospho-beta-D-ribosylamine + glycine + ATP = N(1)-(5-phospho-beta-D-ribosyl)glycinamide + ADP + phosphate + H(+). It functions in the pathway purine metabolism; IMP biosynthesis via de novo pathway; N(1)-(5-phospho-D-ribosyl)glycinamide from 5-phospho-alpha-D-ribose 1-diphosphate: step 2/2. This chain is Phosphoribosylamine--glycine ligase, found in Halalkalibacterium halodurans (strain ATCC BAA-125 / DSM 18197 / FERM 7344 / JCM 9153 / C-125) (Bacillus halodurans).